We begin with the raw amino-acid sequence, 414 residues long: Proton/glutamate-aspartate symporter (414 aa).

The Cytoplasmic portion of the chain corresponds to 1–3; that stretch reads MKK. Residues 4–24 form a helical membrane-spanning segment; sequence LIAFQILIALAVGAVIGHFFP. Residues 25–42 are Extracellular-facing; it reads DFGMALRPVGDGFIRLIK. A helical transmembrane segment spans residues 43 to 63; it reads MIVVPIVFSTIVIGAAGSGSM. The Cytoplasmic portion of the chain corresponds to 64–73; the sequence is KKMGSLGIKT. The chain crosses the membrane as a helical span at residues 74–94; it reads IIWFEVITTLVLGLGLLLANV. Residues 95 to 144 lie on the Extracellular side of the membrane; it reads LKPGVGLDLSHLAKKDIHELSGYTDKVVDFKQMILDIIPTNIIDVMARND. Residues 145-165 form a helical membrane-spanning segment; sequence LLAVIFFAILFGVAAAGIGKA. Over 166-182 the chain is Cytoplasmic; it reads SEPVMKFFESTAQIMFK. The helical transmembrane segment at 183–203 threads the bilayer; the sequence is LTQIVMVTAPIGVLALMAASV. Over 204-219 the chain is Extracellular; that stretch reads GQYGIELLLPMFKLVG. A helical transmembrane segment spans residues 220 to 240; that stretch reads TVFLGLFLILFVLFPLVGLIF. Position 241 (glutamine 241) is a topological domain, cytoplasmic. A helical membrane pass occupies residues 242-262; that stretch reads IKYFEVLKMIWDLFLIAFSTT. Residues 263 to 300 are Extracellular-facing; sequence STETILPQLMDRMEKYGCPKRVVSFVVPSGLSLNCDGS. The helical transmembrane segment at 301–321 threads the bilayer; that stretch reads SLYLSVSCIFLAQAFQVDMTL. Residues 322–324 lie on the Cytoplasmic side of the membrane; it reads SQQ. 2 helical membrane-spanning segments follow: residues 325–345 and 346–366; these read LLMMLVLVMTSKGIAAVPSGS and LVVLLATANAVGLPAEGVAII. Residues 367 to 414 are Cytoplasmic-facing; that stretch reads AGVDRVMDMARTGVNVPGHAIACIVVSKWEKAFRQKEWVSANSQTESI.

Belongs to the dicarboxylate/amino acid:cation symporter (DAACS) (TC 2.A.23) family.

It localises to the cell membrane. With respect to regulation, glutamate uptake is inhibited by beta-hydroxyaspartate and cysteic acid. Its function is as follows. Catalyzes the proton-dependent, binding-protein-independent transport of glutamate and aspartate. This is Proton/glutamate-aspartate symporter from Bacillus subtilis (strain 168).